We begin with the raw amino-acid sequence, 142 residues long: Large ribosomal subunit protein uL11 (142 aa).

Belongs to the universal ribosomal protein uL11 family. In terms of assembly, part of the ribosomal stalk of the 50S ribosomal subunit. Interacts with L10 and the large rRNA to form the base of the stalk. L10 forms an elongated spine to which L12 dimers bind in a sequential fashion forming a multimeric L10(L12)X complex. In terms of processing, one or more lysine residues are methylated.

Its function is as follows. Forms part of the ribosomal stalk which helps the ribosome interact with GTP-bound translation factors. This is Large ribosomal subunit protein uL11 from Parvibaculum lavamentivorans (strain DS-1 / DSM 13023 / NCIMB 13966).